The primary structure comprises 234 residues: UDP-2,3-diacylglucosamine hydrolase (234 aa).

5 residues coordinate Mn(2+): D9, H11, D42, N80, and H115. Position 80-81 (80-81 (NR)) interacts with substrate. Residues D123, S161, K165, K168, and H196 each coordinate substrate. 2 residues coordinate Mn(2+): H196 and H198.

This sequence belongs to the LpxH family. The cofactor is Mn(2+).

The protein resides in the cell inner membrane. It catalyses the reaction UDP-2-N,3-O-bis[(3R)-3-hydroxytetradecanoyl]-alpha-D-glucosamine + H2O = 2-N,3-O-bis[(3R)-3-hydroxytetradecanoyl]-alpha-D-glucosaminyl 1-phosphate + UMP + 2 H(+). The protein operates within glycolipid biosynthesis; lipid IV(A) biosynthesis; lipid IV(A) from (3R)-3-hydroxytetradecanoyl-[acyl-carrier-protein] and UDP-N-acetyl-alpha-D-glucosamine: step 4/6. Its function is as follows. Hydrolyzes the pyrophosphate bond of UDP-2,3-diacylglucosamine to yield 2,3-diacylglucosamine 1-phosphate (lipid X) and UMP by catalyzing the attack of water at the alpha-P atom. Involved in the biosynthesis of lipid A, a phosphorylated glycolipid that anchors the lipopolysaccharide to the outer membrane of the cell. This is UDP-2,3-diacylglucosamine hydrolase from Histophilus somni (strain 129Pt) (Haemophilus somnus).